Here is a 784-residue protein sequence, read N- to C-terminus: LPS-assembly protein LptD (784 aa).

Residues 1 to 24 form the signal peptide; it reads MKKRIPTLLATMIATALYSQQGLA. Disulfide bonds link cysteine 31–cysteine 724 and cysteine 173–cysteine 725.

The protein belongs to the LptD family. Component of the lipopolysaccharide transport and assembly complex. Interacts with LptE and LptA. Post-translationally, contains two intramolecular disulfide bonds.

Its subcellular location is the cell outer membrane. Together with LptE, is involved in the assembly of lipopolysaccharide (LPS) at the surface of the outer membrane. The protein is LPS-assembly protein LptD of Escherichia coli O6:K15:H31 (strain 536 / UPEC).